Consider the following 220-residue polypeptide: MKYPPSLVSLIRELSRLPGIGPKSAQRLAFHLFEQPREDIERLASALLEAKRDLHVCPICFNITDAEKCDVCADPSRDQRTICVVEEPGDVIALERSGEYRGLYHVLHGVLSPMNGVGPDKLHIKPLLPRVGQGMEVILATGTTVEGDATALYLQRLLEPLGAAISRIAYGVPVGGSLEYTDEVTLGRALTGRQTVSKPQPPQRPGDEDGADGAAVPASR.

The segment at 57–72 (CPICFNITDAEKCDVC) adopts a C4-type zinc-finger fold. Residues 80–173 (RTICVVEEPG…AISRIAYGVP (94 aa)) form the Toprim domain. A disordered region spans residues 190–220 (LTGRQTVSKPQPPQRPGDEDGADGAAVPASR).

It belongs to the RecR family.

In terms of biological role, may play a role in DNA repair. It seems to be involved in an RecBC-independent recombinational process of DNA repair. It may act with RecF and RecO. This Deinococcus radiodurans (strain ATCC 13939 / DSM 20539 / JCM 16871 / CCUG 27074 / LMG 4051 / NBRC 15346 / NCIMB 9279 / VKM B-1422 / R1) protein is Recombination protein RecR.